The sequence spans 436 residues: MFDSTLNPLWQRYILAVQEEVKPALGCTEPISLALAAAVAAAELEGPVERVEAWVSPNLMKNGLGVTVPGTGMVGLPIAAALGALGGNANAGLEVLKDATAQAIADAKALLAAGKVSVKIQEPCNEILFSRAKVWHGEKWACVTIVGGHTNIVHIETHNGVVFTQQACVAEGEQESPLTVLSRTTLAEILKFVNEVPFAAIRFILDSAKLNCALSQEGLSGKWGLHIGATLEKQCERGLLAKDLSSSIVIRTSAASDARMGGATLPAMSNSGSGNQGITATMPVVVVAEHFGADDERLARALMLSHLSAIYIHNQLPRLSALCAATTAAMGAAAGMAWLVDGRYETISMAISSMIGDVSGMICDGASNSCAMKVSTSASAAWKAVLMALDDTAVTGNEGIVAHDVEQSIANLCALASHSMQQTDRQIIEIMASKAR.

This sequence belongs to the UPF0597 family.

The sequence is that of UPF0597 protein YhaM from Escherichia coli (strain 55989 / EAEC).